A 109-amino-acid chain; its full sequence is Protein ELF4-LIKE 3 (109 aa).

The disordered stretch occupies residues 88–109; the sequence is SMEASSEGDSSEGRGNRRIRPA.

It belongs to the EARLY FLOWERING 4 family. In terms of assembly, homodimer.

The protein resides in the nucleus. Its function is as follows. Component of the central CCA1/LHY-TOC1 feedback loop in the circadian clock that promotes clock accuracy and is required for sustained rhythms in the absence of daily light/dark cycles. The polypeptide is Protein ELF4-LIKE 3 (EFL3) (Arabidopsis thaliana (Mouse-ear cress)).